The sequence spans 239 residues: tRNA (guanine-N(1)-)-methyltransferase (239 aa).

S-adenosyl-L-methionine contacts are provided by residues Gly108 and 127-132 (LGDFVL).

This sequence belongs to the RNA methyltransferase TrmD family. In terms of assembly, homodimer.

It is found in the cytoplasm. It catalyses the reaction guanosine(37) in tRNA + S-adenosyl-L-methionine = N(1)-methylguanosine(37) in tRNA + S-adenosyl-L-homocysteine + H(+). Its function is as follows. Specifically methylates guanosine-37 in various tRNAs. This is tRNA (guanine-N(1)-)-methyltransferase from Streptococcus thermophilus (strain ATCC BAA-250 / LMG 18311).